We begin with the raw amino-acid sequence, 1291 residues long: Cytoplasmic FMR1-interacting protein (1291 aa).

The segment at 1270-1291 is disordered; the sequence is PSVISSSSHYQDPQKLRQSINN. Residues 1271–1291 are compositionally biased toward polar residues; the sequence is SVISSSSHYQDPQKLRQSINN.

The protein belongs to the CYFIP family. In terms of assembly, interacts with Fmr1 and Rac1. Component of the WAVE complex composed of Hem/Kette, Scar/Wave and Cyfip where it binds through its C-terminus directly to Hem. In the embryo, expressed mainly in the gut and in the developing central nervous system where high levels of expression are found in the CNS neuropile. Expression in the gut diminishes as development proceeds (at protein level). In the adult, expressed specifically in the nervous system.

The protein localises to the cytoplasm. Plays a role in guidance and morphology of central and peripheral axons and in synaptic morphology. Also required for formation of cell membrane protrusions and for bristle development. Plays a role in regulating mitochondrial activity, energy metabolism and membrane potential which maintains normal gamma-aminobutyric acid (GABA) signaling and ensures normal social behavior. This is Cytoplasmic FMR1-interacting protein from Drosophila melanogaster (Fruit fly).